A 262-amino-acid chain; its full sequence is MQVDLLGSAQSAHALHLFHQHSPLVHCMTNDVVQTFTANTLLALGASPAMVIETEEASQFAAIASALLINVGTLTQPRAQAMRAAVEQAKSSQTPWTLDPVAVGALDYRRHFCHELLSFKPAAIRGNASEIMALAGIANGGRGVDTTDAAANAIPAAQTLARETGAIVVVTGEVDYVTDGHRAVGIHGGDPLMTKVVGTGCALSAVVAACCALPGDTLENVASACHWMKQAGERAVARSEGLGSFVPHFLDALWQLTQEVQA.

Met-50 serves as a coordination point for substrate. ATP-binding residues include Arg-125 and Thr-171. Gly-198 is a substrate binding site.

Belongs to the Thz kinase family. The cofactor is Mg(2+).

The catalysed reaction is 5-(2-hydroxyethyl)-4-methylthiazole + ATP = 4-methyl-5-(2-phosphooxyethyl)-thiazole + ADP + H(+). Its pathway is cofactor biosynthesis; thiamine diphosphate biosynthesis; 4-methyl-5-(2-phosphoethyl)-thiazole from 5-(2-hydroxyethyl)-4-methylthiazole: step 1/1. In terms of biological role, catalyzes the phosphorylation of the hydroxyl group of 4-methyl-5-beta-hydroxyethylthiazole (THZ). In Shigella sonnei (strain Ss046), this protein is Hydroxyethylthiazole kinase.